The chain runs to 263 residues: Uracil-DNA glycosylase (263 aa).

D94 functions as the Proton acceptor in the catalytic mechanism.

This sequence belongs to the uracil-DNA glycosylase (UDG) superfamily. UNG family.

It localises to the cytoplasm. It catalyses the reaction Hydrolyzes single-stranded DNA or mismatched double-stranded DNA and polynucleotides, releasing free uracil.. Excises uracil residues from the DNA which can arise as a result of misincorporation of dUMP residues by DNA polymerase or due to deamination of cytosine. In Ralstonia pickettii (strain 12J), this protein is Uracil-DNA glycosylase.